The primary structure comprises 137 residues: Cell division protein SepF (137 aa).

It belongs to the SepF family. As to quaternary structure, homodimer. Interacts with FtsZ.

The protein localises to the cytoplasm. Cell division protein that is part of the divisome complex and is recruited early to the Z-ring. Probably stimulates Z-ring formation, perhaps through the cross-linking of FtsZ protofilaments. Its function overlaps with FtsA. This is Cell division protein SepF from Carboxydothermus hydrogenoformans (strain ATCC BAA-161 / DSM 6008 / Z-2901).